Consider the following 342-residue polypeptide: Isopentenyl-diphosphate delta-isomerase (342 aa).

11–12 is a substrate binding site; the sequence is RK. FMN is bound by residues Ser-68, 69 to 71, Ser-99, and Asn-127; that span reads SMT. 99–101 is a binding site for substrate; that stretch reads SMR. Position 162 (Gln-162) interacts with substrate. Glu-163 lines the Mg(2+) pocket. FMN is bound by residues Lys-194, Thr-224, 274-276, and 295-296; these read GLK and AG.

Belongs to the IPP isomerase type 2 family. Homooctamer. Dimer of tetramers. Requires FMN as cofactor. The cofactor is NADPH. Mg(2+) is required as a cofactor.

Its subcellular location is the cytoplasm. The enzyme catalyses isopentenyl diphosphate = dimethylallyl diphosphate. Involved in the biosynthesis of isoprenoids. Catalyzes the 1,3-allylic rearrangement of the homoallylic substrate isopentenyl (IPP) to its allylic isomer, dimethylallyl diphosphate (DMAPP). The sequence is that of Isopentenyl-diphosphate delta-isomerase from Rickettsia africae (strain ESF-5).